Here is a 273-residue protein sequence, read N- to C-terminus: Type III pantothenate kinase (273 aa).

7–14 (DVGNTAIK) lines the ATP pocket. Substrate-binding positions include phenylalanine 119 and 124-127 (GIDR). The Proton acceptor role is filled by aspartate 126. K(+) is bound at residue aspartate 146. An ATP-binding site is contributed by threonine 149. Substrate is bound at residue threonine 206.

It belongs to the type III pantothenate kinase family. In terms of assembly, homodimer. Requires NH4(+) as cofactor. It depends on K(+) as a cofactor.

It localises to the cytoplasm. It carries out the reaction (R)-pantothenate + ATP = (R)-4'-phosphopantothenate + ADP + H(+). The protein operates within cofactor biosynthesis; coenzyme A biosynthesis; CoA from (R)-pantothenate: step 1/5. Catalyzes the phosphorylation of pantothenate (Pan), the first step in CoA biosynthesis. The chain is Type III pantothenate kinase from Rhodopirellula baltica (strain DSM 10527 / NCIMB 13988 / SH1).